The sequence spans 1107 residues: Rho GTPase-activating protein 39 (1107 aa).

The tract at residues 1–21 is disordered; sequence MSQAQDYECRSHHVDEQEPRI. The residue at position 2 (Ser-2) is an N-acetylserine. Positions 7–19 are enriched in basic and acidic residues; it reads YECRSHHVDEQEP. 2 WW domains span residues 25 to 58 and 63 to 97; these read STRL…PPAG and RTSE…RPQN. Residues 111-122 show a composition bias toward polar residues; it reads QNTESPRASADN. Disordered stretches follow at residues 111–173, 218–267, 282–311, and 326–370; these read QNTE…PPGV, PSFL…PERR, SPLL…LYEE, and MDVQ…LMRT. A compositionally biased stretch (low complexity) spans 123–136; that stretch reads SPGRGSRDGSTGSS. A compositionally biased stretch (polar residues) spans 242-254; it reads SGSQHSPNLQTFV. Ser-282 carries the phosphoserine modification. Composition is skewed to polar residues over residues 331-343 and 353-369; these read EANS…SPQR and LQTT…QLMR. Ser-380, Ser-384, Ser-402, and Ser-403 each carry phosphoserine. 3 disordered regions span residues 404-429, 441-529, and 563-585; these read PKLR…QPSP, SGDY…RASL, and MKQR…GAVP. A compositionally biased stretch (polar residues) spans 470–484; it reads SWSSQQDTMSSTGYS. A phosphoserine mark is found at Ser-597, Ser-683, Ser-708, and Ser-719. The MyTH4 domain maps to 715–867; it reads WSSESIKKPM…PYVEEPDGVA (153 aa). The Rho-GAP domain occupies 914–1102; it reads SALQEVMSMQ…VLIQHLDTSF (189 aa).

It is found in the nucleus. The sequence is that of Rho GTPase-activating protein 39 (Arhgap39) from Mus musculus (Mouse).